Consider the following 430-residue polypeptide: Septin-14 (430 aa).

One can recognise a Septin-type G domain in the interval 48 to 313 (KGFSFNILCV…ECYRSNRLQK (266 aa)). Residues 58 to 65 (GETGIGKT) are G1 motif. GTP is bound by residues 58–65 (GETGIGKT), Gly113, 194–202 (KADSLSKND), Gly246, and Arg261. Residues 110–113 (KTVG) are G3 motif. Positions 193–196 (AKAD) are G4 motif. The stretch at 329 to 410 (QEMYEAKRRE…IIDFYKMKAA (82 aa)) forms a coiled coil. Positions 367–430 (DAEKELQDKF…NIKKDKDRKK (64 aa)) are required for interaction with SEPTIN4. Required for migration of cortical neurons during corticogenesis.

Belongs to the TRAFAC class TrmE-Era-EngA-EngB-Septin-like GTPase superfamily. Septin GTPase family. As to quaternary structure, septins polymerize into heterooligomeric protein complexes that form filaments, and can associate with cellular membranes, actin filaments and microtubules. GTPase activity is required for filament formation. Interacts with ACTN4. Interacts with SEPTIN9. Interacts (via C-terminus) with SEPTIN4. As to expression, expressed in the testis and brain including the cerebrum, hippocampus and cerebellum (at protein level).

Its subcellular location is the cytoplasm. It localises to the cytoskeleton. It is found in the cell projection. The protein resides in the axon. The protein localises to the dendrite. Its subcellular location is the perikaryon. It localises to the perinuclear region. It is found in the cytoplasmic vesicle. The protein resides in the secretory vesicle. The protein localises to the acrosome. Functionally, filament-forming cytoskeletal GTPase. Involved in the migration of cortical neurons and the formation of neuron leading processes during embryonic development. Plays a role in sperm head formation during spermiogenesis, potentially via facilitating localization of ACTN4 to cell filaments. The protein is Septin-14 of Mus musculus (Mouse).